The sequence spans 618 residues: Proline--tRNA ligase (618 aa).

This sequence belongs to the class-II aminoacyl-tRNA synthetase family. ProS type 1 subfamily. As to quaternary structure, homodimer.

It localises to the cytoplasm. It carries out the reaction tRNA(Pro) + L-proline + ATP = L-prolyl-tRNA(Pro) + AMP + diphosphate. Functionally, catalyzes the attachment of proline to tRNA(Pro) in a two-step reaction: proline is first activated by ATP to form Pro-AMP and then transferred to the acceptor end of tRNA(Pro). As ProRS can inadvertently accommodate and process non-cognate amino acids such as alanine and cysteine, to avoid such errors it has two additional distinct editing activities against alanine. One activity is designated as 'pretransfer' editing and involves the tRNA(Pro)-independent hydrolysis of activated Ala-AMP. The other activity is designated 'posttransfer' editing and involves deacylation of mischarged Ala-tRNA(Pro). The misacylated Cys-tRNA(Pro) is not edited by ProRS. In Streptococcus pyogenes serotype M5 (strain Manfredo), this protein is Proline--tRNA ligase.